The sequence spans 451 residues: KNR4/SMI1 homolog 1 (451 aa).

A compositionally biased stretch (polar residues) spans 410–422 (ENQIAGGSDNAKN). The tract at residues 410–451 (ENQIAGGSDNAKNQVKLGETSDTKQDDTSKIASTVSTSDEDE) is disordered. Residues 428–438 (ETSDTKQDDTS) show a composition bias toward basic and acidic residues. Residues 439–451 (KIASTVSTSDEDE) are compositionally biased toward polar residues.

It belongs to the KNR4/SMI1 family.

The chain is KNR4/SMI1 homolog 1 from Debaryomyces hansenii (strain ATCC 36239 / CBS 767 / BCRC 21394 / JCM 1990 / NBRC 0083 / IGC 2968) (Yeast).